A 213-amino-acid polypeptide reads, in one-letter code: Orotate phosphoribosyltransferase (213 aa).

Lys26 contacts 5-phospho-alpha-D-ribose 1-diphosphate. Residue 34-35 (FF) coordinates orotate. 5-phospho-alpha-D-ribose 1-diphosphate-binding positions include 72–73 (YK), Arg99, Lys100, Lys103, His105, and 124–132 (DDVITAGTA). 2 residues coordinate orotate: Thr128 and Arg156.

Belongs to the purine/pyrimidine phosphoribosyltransferase family. PyrE subfamily. As to quaternary structure, homodimer. Requires Mg(2+) as cofactor.

The catalysed reaction is orotidine 5'-phosphate + diphosphate = orotate + 5-phospho-alpha-D-ribose 1-diphosphate. It participates in pyrimidine metabolism; UMP biosynthesis via de novo pathway; UMP from orotate: step 1/2. Functionally, catalyzes the transfer of a ribosyl phosphate group from 5-phosphoribose 1-diphosphate to orotate, leading to the formation of orotidine monophosphate (OMP). In Haemophilus influenzae (strain 86-028NP), this protein is Orotate phosphoribosyltransferase.